Consider the following 566-residue polypeptide: Proline--tRNA ligase (566 aa).

Belongs to the class-II aminoacyl-tRNA synthetase family. ProS type 1 subfamily. As to quaternary structure, homodimer.

The protein resides in the cytoplasm. It carries out the reaction tRNA(Pro) + L-proline + ATP = L-prolyl-tRNA(Pro) + AMP + diphosphate. In terms of biological role, catalyzes the attachment of proline to tRNA(Pro) in a two-step reaction: proline is first activated by ATP to form Pro-AMP and then transferred to the acceptor end of tRNA(Pro). As ProRS can inadvertently accommodate and process non-cognate amino acids such as alanine and cysteine, to avoid such errors it has two additional distinct editing activities against alanine. One activity is designated as 'pretransfer' editing and involves the tRNA(Pro)-independent hydrolysis of activated Ala-AMP. The other activity is designated 'posttransfer' editing and involves deacylation of mischarged Ala-tRNA(Pro). The misacylated Cys-tRNA(Pro) is not edited by ProRS. The protein is Proline--tRNA ligase of Bacillus cereus (strain B4264).